The following is a 278-amino-acid chain: Bifunctional protein FolD (278 aa).

NADP(+) is bound by residues 163 to 165 (GRS), Ser-188, and Val-229.

This sequence belongs to the tetrahydrofolate dehydrogenase/cyclohydrolase family. As to quaternary structure, homodimer.

It carries out the reaction (6R)-5,10-methylene-5,6,7,8-tetrahydrofolate + NADP(+) = (6R)-5,10-methenyltetrahydrofolate + NADPH. The catalysed reaction is (6R)-5,10-methenyltetrahydrofolate + H2O = (6R)-10-formyltetrahydrofolate + H(+). It participates in one-carbon metabolism; tetrahydrofolate interconversion. Its function is as follows. Catalyzes the oxidation of 5,10-methylenetetrahydrofolate to 5,10-methenyltetrahydrofolate and then the hydrolysis of 5,10-methenyltetrahydrofolate to 10-formyltetrahydrofolate. The polypeptide is Bifunctional protein FolD (Exiguobacterium sp. (strain ATCC BAA-1283 / AT1b)).